The primary structure comprises 176 residues: Inorganic pyrophosphatase (176 aa).

Positions 30, 44, and 56 each coordinate substrate. Mg(2+) contacts are provided by Asp-66, Asp-71, and Asp-103. A substrate-binding site is contributed by Tyr-142.

It belongs to the PPase family. Homohexamer. Mg(2+) is required as a cofactor.

The protein resides in the cytoplasm. The enzyme catalyses diphosphate + H2O = 2 phosphate + H(+). In terms of biological role, catalyzes the hydrolysis of inorganic pyrophosphate (PPi) forming two phosphate ions. The chain is Inorganic pyrophosphatase from Brucella melitensis biotype 1 (strain ATCC 23456 / CCUG 17765 / NCTC 10094 / 16M).